The chain runs to 503 residues: Glucosaminyl-phosphatidylinositol-acyltransferase PIGW (503 aa).

Topologically, residues 1 to 21 (MSQKQMKEAFVSNQNGTSVLE) are lumenal. Residue N15 is glycosylated (N-linked (GlcNAc...) asparagine). Residues 22-42 (ITEGLCLPALCILCRGLLIIL) traverse the membrane as a helical segment. Residues 43-56 (SQQLCSSLHNSRTR) are Cytoplasmic-facing. The helical transmembrane segment at 57–75 (FLVDFAFLIVPLVTTLTIF) threads the bilayer. The Lumenal segment spans residues 76–78 (SSF). The chain crosses the membrane as a helical span at residues 79–98 (VLLEYLVAIILGAGLLYEIY). The Cytoplasmic segment spans residues 99–131 (CRRTCYARMPFQKICEKFLKVSLESEHIPAISC). Residues 132–152 (FRVVNSAFTAVAILAVDFPLF) form a helical membrane-spanning segment. The Lumenal portion of the chain corresponds to 153-160 (PRRYAKTE). A helical membrane pass occupies residues 161–181 (LYGTGAMDYGVGGFIFGSAMV). Topologically, residues 182-201 (SPEVRRKYTKGSRFCYLTKS) are cytoplasmic. The chain crosses the membrane as a helical span at residues 202-222 (LYSLWPLVFLGVGRLVAIKSV). Topologically, residues 223–236 (DYQEHLTEYGVHWN) are lumenal. A helical membrane pass occupies residues 237-257 (FFFTLIAVKLITSLLLLICPL). Topologically, residues 258 to 259 (NR) are cytoplasmic. A helical membrane pass occupies residues 260–280 (SWVVAISIAALYQLALDFTPL). Residues 281–304 (KSLILYGTDGSGTRVGLLNANREG) are Lumenal-facing. A helical transmembrane segment spans residues 305-325 (IISVLGYVAVHMAGVQTGLYV). Residues 326–337 (LKKRSHIKDWIK) are Cytoplasmic-facing. Residues 338–358 (VACCILLTAIGLFISLYIVQV) form a helical membrane-spanning segment. Topologically, residues 359-369 (NVEVASRRMAN) are lumenal. A helical membrane pass occupies residues 370–390 (LAFCIWIVASCLILLSSLLLG). Over 391 to 447 (DIILSFAKFVIKEAAVPCSWKLIQSPTANKKHLESIVFDAKRKEPTLCLITAMNRNQ) the chain is Cytoplasmic. Residue S415 is modified to Phosphoserine. Residues 448–468 (LLFFLLSNVTTGLVNLSIDTL) form a helical membrane-spanning segment. At 469 to 472 (HSST) the chain is on the lumenal side. A helical membrane pass occupies residues 473-493 (PWALCLLNLYMFTNCLIIYVL). The Cytoplasmic portion of the chain corresponds to 494–503 (HLQDKTIKFW).

It belongs to the PIGW family.

Its subcellular location is the endoplasmic reticulum membrane. It functions in the pathway glycolipid biosynthesis; glycosylphosphatidylinositol-anchor biosynthesis. Its function is as follows. Acyltransferase that catalyzes the acyl transfer from an acyl-CoA at the 2-OH position of the inositol ring of glucosaminyl phosphatidylinositol (GlcN-PI) to generate glucosaminyl acyl phosphatidylinositol (GlcN-(acyl)PI) and participates in the fourth step of GPI-anchor biosynthesis. Required for the transport of GPI-anchored proteins to the plasma membrane. Acetylation during GPI-anchor biosynthesis is not essential for the subsequent mannosylation and is usually removed soon after the attachment of GPIs to proteins. This Bos taurus (Bovine) protein is Glucosaminyl-phosphatidylinositol-acyltransferase PIGW.